The primary structure comprises 524 residues: MKKFDNLGLDNIKEIFHNLSYDELNAHEKVNNEGLSTDNDTFCVDTGIFTGRSPKDKYFVKQDPSSKYIAWGKVNQPITKELFDKLLTKAKQELSGKKIYVQDAFCGASLQSRKAVRFVTEIAWQAHFVKNMFIRPSQEELENFKADFIVYNACKCINEDYKQDGLNSEVFVIFNVEENIAVIGGTWYGGEMKKGIFSMMNYWLPLENKLSMHCSANVGEKGDVALFFGLSGTGKTTLSTDPKRKLIGDDEHGWDDEGVFNFEGGCYAKTINLDPEHEPEIYGAIKRNALLENVVLRADKSVDYADASKTENTRVSYPIEHIENHEPSLKAGHPKNIIFLSADAFGILPPVSKLSKEQAMYYFLSGYTAKVAGTERGITEPQATFSACFGEPFMPLHPTVYARLLGEKIEKYEVNVYLVNTGWSGGSYGVGKRMSIKATRACINAILDGSITKCEFENFEVFDLAIPKALEGVESTLLNPINTWSDKNAYTETRDKLAHMFVQNFKRYEDVKEGIEFSKFGPKI.

The substrate site is built by Arg52, Tyr188, and Lys194. Residues Lys194, His213, and 229–237 (GLSGTGKTT) each bind ATP. The Mn(2+) site is built by Lys194 and His213. Asp250 is a Mn(2+) binding site. 3 residues coordinate ATP: Glu278, Arg314, and Thr439. Position 314 (Arg314) interacts with substrate.

This sequence belongs to the phosphoenolpyruvate carboxykinase (ATP) family. Mn(2+) is required as a cofactor.

Its subcellular location is the cytoplasm. The catalysed reaction is oxaloacetate + ATP = phosphoenolpyruvate + ADP + CO2. The protein operates within carbohydrate biosynthesis; gluconeogenesis. Involved in the gluconeogenesis. Catalyzes the conversion of oxaloacetate (OAA) to phosphoenolpyruvate (PEP) through direct phosphoryl transfer between the nucleoside triphosphate and OAA. In Campylobacter jejuni subsp. doylei (strain ATCC BAA-1458 / RM4099 / 269.97), this protein is Phosphoenolpyruvate carboxykinase (ATP).